The primary structure comprises 437 residues: Membrane protein NfeD1b (437 aa).

5 helical membrane-spanning segments follow: residues 2–22 (LQIK…LLGV), 231–251 (WLTN…GLTV), 253–273 (LFSP…LLFF), 288–308 (LLFI…GGII), and 316–336 (IIAS…SLLI).

Belongs to the NfeD family.

It is found in the cell membrane. The sequence is that of Membrane protein NfeD1b from Bacillus subtilis (strain 168).